The following is a 342-amino-acid chain: MEPAFGEVNQLGGVFVNGRPLPNAIRLRIVELAQLGIRPCDISRQLRVSHGCVSKILARYNETGSILPGAIGGSKPRVTTPTVVKHIRTYKQRDPGIFAWEIRDRLLADGVCDKYNVPSVSSISRILRNKIGNLAQQGHYDSYKQHQPAPQPALPYNHIYSYPSPITAAAAKVPTPPGVPAIPGSVALPRTWPSSHSVTDILGIRSITDQGVSDSSPYHSPKVEEWSSLGRNNFSAAAPHAVNGLEKGALEQEAKYGQAPNGLPAVSSFVSASSMAPYPTPAQVSPYMTYSAAPSGYVAGHGWQHAGSTPLSPHNCDIPTSLAFKGMQAAREGSHSVAASAL.

Residues 4–130 constitute a DNA-binding region (paired); that stretch reads AFGEVNQLGG…SSISRILRNK (127 aa). The tract at residues 7 to 63 is PAI subdomain; sequence EVNQLGGVFVNGRPLPNAIRLRIVELAQLGIRPCDISRQLRVSHGCVSKILARYNET. The segment at 82–130 is RED subdomain; it reads TVVKHIRTYKQRDPGIFAWEIRDRLLADGVCDKYNVPSVSSISRILRNK. Positions 168-189 are interaction with KDM5B; that stretch reads AAAAKVPTPPGVPAIPGSVALP.

In terms of assembly, interacts with KDM5B.

Its subcellular location is the nucleus. Transcription factor required for normal development of thymus, parathyroid glands, ultimobranchial bodies, teeth, skeletal elements of skull and larynx as well as distal limbs. The sequence is that of Paired box protein Pax-9 from Rattus norvegicus (Rat).